We begin with the raw amino-acid sequence, 358 residues long: uncharacterized protein (358 aa).

207 to 214 lines the ATP pocket; the sequence is AAVKDGKT.

This is an uncharacterized protein from Bacillus subtilis (strain 168).